A 225-amino-acid polypeptide reads, in one-letter code: F-box protein SKIP27 (225 aa).

Positions Lys-121–Thr-169 constitute an F-box domain.

As to quaternary structure, part of a SCF (ASK-cullin-F-box) protein ligase complex. Interacts with SKP1A/ASK1 and SPK1B/ASK2.

Its subcellular location is the nucleus. It functions in the pathway protein modification; protein ubiquitination. Component of SCF(ASK-cullin-F-box) E3 ubiquitin ligase complexes, which may mediate the ubiquitination and subsequent proteasomal degradation of target proteins. The protein is F-box protein SKIP27 (SKIP27) of Arabidopsis thaliana (Mouse-ear cress).